Here is a 196-residue protein sequence, read N- to C-terminus: Large ribosomal subunit protein eL15 (196 aa).

Positions 155-196 (THRGRAERGLTSAGKKGRGQRRKGKGTEKNYPSVQAHDRRGK) are disordered. Over residues 169–178 (KKGRGQRRKG) the composition is skewed to basic residues.

This sequence belongs to the eukaryotic ribosomal protein eL15 family.

The sequence is that of Large ribosomal subunit protein eL15 from Methanocella arvoryzae (strain DSM 22066 / NBRC 105507 / MRE50).